Reading from the N-terminus, the 262-residue chain is Phenylalanine-4-hydroxylase (262 aa).

Fe cation-binding residues include His121, His126, and Glu166.

This sequence belongs to the biopterin-dependent aromatic amino acid hydroxylase family. In terms of assembly, monomer. The cofactor is Fe(2+).

The catalysed reaction is (6R)-L-erythro-5,6,7,8-tetrahydrobiopterin + L-phenylalanine + O2 = (4aS,6R)-4a-hydroxy-L-erythro-5,6,7,8-tetrahydrobiopterin + L-tyrosine. The protein operates within amino-acid degradation; L-phenylalanine degradation; acetoacetate and fumarate from L-phenylalanine: step 1/6. In Pseudomonas aeruginosa (strain ATCC 15692 / DSM 22644 / CIP 104116 / JCM 14847 / LMG 12228 / 1C / PRS 101 / PAO1), this protein is Phenylalanine-4-hydroxylase (phhA).